Reading from the N-terminus, the 319-residue chain is Methyltransferase tpcM (319 aa).

Positions 63 to 155 are methyltransferase domain; sequence DVGAGIGPYA…QLRPGGTFAC (93 aa).

The protein belongs to the methyltransferase superfamily. In terms of tissue distribution, specifically expressed in conidia.

Its pathway is secondary metabolite biosynthesis. In terms of biological role, methyltransferase; part of the gene cluster that mediates the biosynthesis of trypacidin, a mycotoxin with antiprotozoal activity and that plays a role in the infection process. The pathway begins with the synthesis of atrochrysone thioester by the polyketide synthase (PKS) tpcC. The atrochrysone carboxyl ACP thioesterase tpcB then breaks the thioester bond and releases the atrochrysone carboxylic acid from tpcC. The decarboxylase tpcK converts atrochrysone carboxylic acid to atrochrysone which is further reduced into emodin anthrone. The next step is performed by the emodin anthrone oxygenase tpcL that catalyzes the oxidation of emodinanthrone to emodin. Emodin O-methyltransferase encoded by tpcA catalyzes methylation of the 8-hydroxy group of emodin to form questin. Ring cleavage of questin by questin oxidase tpcI leads to desmethylsulochrin via several intermediates including questin epoxide. Another methylation step catalyzed by tpcM leads to the formation of sulochrin which is further converted to monomethylsulfochrin by tpcH. Finally, the tpcJ catalyzes the conversion of monomethylsulfochrin to trypacidin. Trypacidin is toxic for human pulmonary and bronchial epithelial cells by initiating the intracellular formation of nitric oxide (NO) and hydrogen peroxide (H(2)O(2)), thus triggering host necrotic cell death. The trypacidin pathway is also able to produce endocrocin via a distinct route from the endocrocin Enc pathway. The sequence is that of Methyltransferase tpcM from Aspergillus fumigatus (strain ATCC MYA-4609 / CBS 101355 / FGSC A1100 / Af293) (Neosartorya fumigata).